A 320-amino-acid polypeptide reads, in one-letter code: Non-structural protein 5 (320 aa).

The chain is Non-structural protein 5 (S9) from Lymantria dispar (Gypsy moth).